The primary structure comprises 472 residues: Protein PIN-LIKES 1 (472 aa).

The Lumenal portion of the chain corresponds to 1–93; sequence MSLTQSAKLH…FYSMRMRLLD (93 aa). Residues 94–114 traverse the membrane as a helical segment; the sequence is LFITSSIPVAKILLITGIGFY. The Cytoplasmic segment spans residues 115–133; the sequence is LALDQVNILNHDARKQLNN. Residues 134 to 154 form a helical membrane-spanning segment; it reads IVFYVFSPSLVASSLSETITY. The Lumenal portion of the chain corresponds to 155–161; it reads ESMVKMW. A helical membrane pass occupies residues 162-182; that stretch reads FMPLNVLLTFIIGSFLGWIVI. Residues 183-193 lie on the Cytoplasmic side of the membrane; that stretch reads KITKPPSHLRG. Residues 194–214 traverse the membrane as a helical segment; the sequence is IIVGCCAAGNLGNMPLIIIPA. Topologically, residues 215–231 are lumenal; the sequence is ICNEKGSPFGDPESCEK. The chain crosses the membrane as a helical span at residues 232–252; sequence FGLGYIALSMAIGAIYIWTYV. Topologically, residues 253–309 are cytoplasmic; sequence YNLMRMLANPAGETAINSTSSTMPLISPKVEVAEQVGTWGKVKQRVCSVAEKINLRT. Residues 310–330 traverse the membrane as a helical segment; it reads IFAPSTIAALIALAVGLNPLL. Residues 331 to 347 lie on the Lumenal side of the membrane; sequence RKLLVGNTAPLRVIEDS. Residues 348–368 form a helical membrane-spanning segment; it reads VSLLGDGAIPVLTLIVGGNLL. Over 369 to 379 the chain is Cytoplasmic; sequence NGLRGSGINKS. A helical membrane pass occupies residues 380–400; the sequence is VIMGVVVVRYLLLPILGVFIV. The Lumenal segment spans residues 401–413; the sequence is RGAHYLGLVTSEP. A helical membrane pass occupies residues 414-434; that stretch reads LYQFVLLLQYVVPPAMNLGTI. The Cytoplasmic portion of the chain corresponds to 435–446; it reads TQLFGSGESECS. Residues 447-467 traverse the membrane as a helical segment; that stretch reads VILFWSYALASVSLTVWPTFF. Residues 468–472 lie on the Lumenal side of the membrane; that stretch reads MWLVA.

It belongs to the auxin efflux carrier (TC 2.A.69.2) family. As to expression, expressed in flowers.

It is found in the endoplasmic reticulum membrane. In terms of biological role, involved in cellular auxin homeostasis by regulating auxin metabolism. Regulates intracellular auxin accumulation at the endoplasmic reticulum and thus auxin availability for nuclear auxin signaling. The protein is Protein PIN-LIKES 1 of Arabidopsis thaliana (Mouse-ear cress).